We begin with the raw amino-acid sequence, 304 residues long: Methionyl-tRNA formyltransferase (304 aa).

Ser110–Pro113 serves as a coordination point for (6S)-5,6,7,8-tetrahydrofolate.

It belongs to the Fmt family.

The enzyme catalyses L-methionyl-tRNA(fMet) + (6R)-10-formyltetrahydrofolate = N-formyl-L-methionyl-tRNA(fMet) + (6S)-5,6,7,8-tetrahydrofolate + H(+). Attaches a formyl group to the free amino group of methionyl-tRNA(fMet). The formyl group appears to play a dual role in the initiator identity of N-formylmethionyl-tRNA by promoting its recognition by IF2 and preventing the misappropriation of this tRNA by the elongation apparatus. This chain is Methionyl-tRNA formyltransferase, found in Sulfurovum sp. (strain NBC37-1).